Reading from the N-terminus, the 468-residue chain is Glutamate--tRNA ligase (468 aa).

Positions 14–24 (PSPTGFIHLGN) match the 'HIGH' region motif. Positions 246-250 (KMSKR) match the 'KMSKS' region motif. Lys-249 serves as a coordination point for ATP.

The protein belongs to the class-I aminoacyl-tRNA synthetase family. Glutamate--tRNA ligase type 1 subfamily. In terms of assembly, monomer.

The protein resides in the cytoplasm. The catalysed reaction is tRNA(Glu) + L-glutamate + ATP = L-glutamyl-tRNA(Glu) + AMP + diphosphate. In terms of biological role, catalyzes the attachment of glutamate to tRNA(Glu) in a two-step reaction: glutamate is first activated by ATP to form Glu-AMP and then transferred to the acceptor end of tRNA(Glu). The chain is Glutamate--tRNA ligase from Leptothrix cholodnii (strain ATCC 51168 / LMG 8142 / SP-6) (Leptothrix discophora (strain SP-6)).